The following is a 1159-amino-acid chain: WASH complex subunit 5 (1159 aa).

The protein belongs to the strumpellin family. In terms of assembly, component of the WASH core complex also described as WASH regulatory complex (SHRC) composed of WASH (WASHC1, WASH2P or WASH3P), WASHC2 (WASHC2A or WASHC2C), WASHC3, WASHC4 and WASHC5. The WASH core complex associates via WASHC2 with the F-actin-capping protein dimer (formed by CAPZA1, CAPZA2 or CAPZA3 and CAPZB) in a transient or substoichiometric manner which was initially described as WASH complex. Interacts with VCP, PI4K2A.

It localises to the cytoplasm. The protein resides in the cytosol. It is found in the endoplasmic reticulum. Its subcellular location is the early endosome. Its function is as follows. Acts as a component of the WASH core complex that functions as a nucleation-promoting factor (NPF) at the surface of endosomes, where it recruits and activates the Arp2/3 complex to induce actin polymerization, playing a key role in the fission of tubules that serve as transport intermediates during endosome sorting. May be involved in axonal outgrowth. Involved in cellular localization of ADRB2. Involved in cellular trafficking of BLOC-1 complex cargos such as ATP7A and VAMP7. Involved in cytokinesis and following polar body extrusion during oocyte meiotic maturation. This Mus musculus (Mouse) protein is WASH complex subunit 5.